The primary structure comprises 252 residues: Triosephosphate isomerase (252 aa).

Position 10–12 (10–12) interacts with substrate; the sequence is NWK. The active-site Electrophile is H96. E168 functions as the Proton acceptor in the catalytic mechanism. Substrate contacts are provided by residues G174, S214, and 235–236; that span reads GG.

It belongs to the triosephosphate isomerase family. As to quaternary structure, homodimer.

The protein localises to the cytoplasm. The catalysed reaction is D-glyceraldehyde 3-phosphate = dihydroxyacetone phosphate. It participates in carbohydrate biosynthesis; gluconeogenesis. It functions in the pathway carbohydrate degradation; glycolysis; D-glyceraldehyde 3-phosphate from glycerone phosphate: step 1/1. Its function is as follows. Involved in the gluconeogenesis. Catalyzes stereospecifically the conversion of dihydroxyacetone phosphate (DHAP) to D-glyceraldehyde-3-phosphate (G3P). In Lactococcus lactis subsp. lactis (strain IL1403) (Streptococcus lactis), this protein is Triosephosphate isomerase.